Reading from the N-terminus, the 412-residue chain is Inositol polyphosphate-5-phosphatase A (412 aa).

Residue Cys-409 is the site of S-farnesyl cysteine attachment. A propeptide spans 410–412 (VVQ) (removed in mature form).

It belongs to the inositol 1,4,5-trisphosphate 5-phosphatase type I family. In terms of assembly, interacts with TASOR. Isoprenylation at Cys-409 is required for localization at the membrane. In terms of tissue distribution, expressed at high levels in cerebellar Purkinje cells (at protein level). Expressed in Sertoli cells of the testis.

It is found in the cell membrane. The protein localises to the cell projection. Its subcellular location is the dendrite. The enzyme catalyses 1D-myo-inositol 1,4,5-trisphosphate + H2O = 1D-myo-inositol 1,4-bisphosphate + phosphate. It catalyses the reaction 1D-myo-inositol 1,3,4,5-tetrakisphosphate + H2O = 1D-myo-inositol 1,3,4-trisphosphate + phosphate. Phosphatase that specifically hydrolyzes the 5-phosphate of inositol 1,4,5-trisphosphate to inositol 1,4-bisphosphate, and inositol 1,3,4,5-tetrasphosphate to inositol 1,3,4-trisphosphate. Plays a crucial role in the survival of cerebellar Purkinje cells. In Mus musculus (Mouse), this protein is Inositol polyphosphate-5-phosphatase A (Inpp5a).